Reading from the N-terminus, the 362-residue chain is Probable dual-specificity RNA methyltransferase RlmN (362 aa).

The active-site Proton acceptor is the Glu91. The Radical SAM core domain maps to 97-329 (QHYGLSVCVT…KKNGVNCVVR (233 aa)). The cysteines at positions 104 and 340 are disulfide-linked. [4Fe-4S] cluster contacts are provided by Cys111, Cys115, and Cys118. S-adenosyl-L-methionine contacts are provided by residues 163–164 (GE), Ser195, 218–220 (SLH), and Asn296. Cys340 acts as the S-methylcysteine intermediate in catalysis.

It belongs to the radical SAM superfamily. RlmN family. [4Fe-4S] cluster serves as cofactor.

The protein localises to the cytoplasm. The enzyme catalyses adenosine(2503) in 23S rRNA + 2 reduced [2Fe-2S]-[ferredoxin] + 2 S-adenosyl-L-methionine = 2-methyladenosine(2503) in 23S rRNA + 5'-deoxyadenosine + L-methionine + 2 oxidized [2Fe-2S]-[ferredoxin] + S-adenosyl-L-homocysteine. It carries out the reaction adenosine(37) in tRNA + 2 reduced [2Fe-2S]-[ferredoxin] + 2 S-adenosyl-L-methionine = 2-methyladenosine(37) in tRNA + 5'-deoxyadenosine + L-methionine + 2 oxidized [2Fe-2S]-[ferredoxin] + S-adenosyl-L-homocysteine. Functionally, specifically methylates position 2 of adenine 2503 in 23S rRNA and position 2 of adenine 37 in tRNAs. The sequence is that of Probable dual-specificity RNA methyltransferase RlmN from Streptococcus gordonii (strain Challis / ATCC 35105 / BCRC 15272 / CH1 / DL1 / V288).